Here is a 44-residue protein sequence, read N- to C-terminus: VFNSERPRFVIVKPRYLKGMVVNGDSWPDHFIEDANVFTKNPDK.

The sequence is that of Unknown protein 9 from Pseudotsuga menziesii (Douglas-fir).